The primary structure comprises 1355 residues: Collagen alpha-2(I) chain (1355 aa).

The N-terminal stretch at 1-22 is a signal peptide; sequence MLSFVDLRSVLLLAVTLYLVTC. Gln-23 carries the post-translational modification Pyrrolidone carboxylic acid. A propeptide spans 23–71 (N-terminal propeptide); the sequence is QEVRRGPRGDKGPPGEQGPPGIPGRDGEDGLPGLPGPPGVPGLGGNFAA. Residues 26–35 are compositionally biased toward basic and acidic residues; the sequence is RRGPRGDKGP. The interval 26-1111 is disordered; it reads RRGPRGDKGP…GDGGEYYRAD (1086 aa). Gln-72 carries the post-translational modification Pyrrolidone carboxylic acid. Lys-77 is modified (allysine). Positions 99-108 are enriched in low complexity; the sequence is PGSQGFQGLP. Over residues 132–146 the composition is skewed to basic and acidic residues; it reads AGEDGHPGKSGRPGE. At Lys-168 the chain carries 5-hydroxylysine; alternate. Lys-168 carries an O-linked (Gal...) hydroxylysine; alternate glycan. Residues 218–267 show a composition bias toward low complexity; sequence PAGSAGSRGSDGSSGPVGPAGPIGSAGAPGLPGAPGAKGELGPAGNNGPT. Residues 276-290 are compositionally biased toward pro residues; sequence PGPPGSLGPAGPPGN. A compositionally biased stretch (low complexity) spans 291–303; the sequence is PGTNGVNGAKGTA. The span at 304-322 shows a compositional bias: gly residues; the sequence is GLPGVGGAPGLPGGRGIPG. The segment covering 327-336 has biased composition (low complexity); sequence AGPSGARGLA. 2 stretches are compositionally biased toward gly residues: residues 340–349 and 403–412; these read GIAGGKGDTG and GRAGGIGPAG. 2 stretches are compositionally biased toward low complexity: residues 413-426 and 465-495; these read SRGS…RGPN and EGRS…NGEP. Gly residues-rich tracts occupy residues 523–532 and 586–595; these read GPAGLGGATG and GESGGAGPHG. Residues 596 to 618 show a composition bias toward low complexity; that stretch reads PSGSRGPSGAPGPDGQKGEPGAA. Residues 619–628 are compositionally biased toward gly residues; that stretch reads GLNGGLGPSG. Composition is skewed to low complexity over residues 659–675, 687–701, and 708–726; these read NPGR…AGAP, SGPA…PRGA, and AGPA…AGHT. The span at 728-738 shows a compositional bias: basic and acidic residues; that stretch reads AKGDRGAKGPK. 2 stretches are compositionally biased toward low complexity: residues 741–767 and 776–788; these read AGSP…STGA and ATGF…RAGA. The span at 804 to 813 shows a compositional bias: basic and acidic residues; the sequence is PGKDGSRGPR. The span at 852 to 869 shows a compositional bias: low complexity; that stretch reads AGPSGVLGARGILGLPGT. The segment covering 874–883 has biased composition (gly residues); it reads GLPGGPGSNG. Low complexity-rich tracts occupy residues 884 to 912 and 947 to 966; these read EPGP…VGHS and PSGL…AGKS. Residues 967-976 are compositionally biased toward gly residues; that stretch reads GNRGEGGPSG. The span at 996-1014 shows a compositional bias: basic and acidic residues; it reads RGDKGEAGERGARGLDGRK. The span at 1019-1041 shows a compositional bias: low complexity; sequence LSGLPGPSGTPGETGPSGSVGPV. A compositionally biased stretch (pro residues) spans 1080–1091; that stretch reads AGPPGPPGPPGH. The segment covering 1093-1105 has biased composition (gly residues); the sequence is GPSGGGYDGGDGG. The propeptide at 1111–1355 is C-terminal propeptide; that stretch reads DQPERKPKDY…GFEIGPVCFK (245 aa). One can recognise a Fibrillar collagen NC1 domain in the interval 1120–1355; the sequence is YEVDATLKSL…GFEIGPVCFK (236 aa). 3 cysteine pairs are disulfide-bonded: Cys-1150–Cys-1182, Cys-1190–Cys-1353, and Cys-1261–Cys-1306. Ca(2+) contacts are provided by Asp-1168, Asn-1170, Gln-1171, Cys-1173, and Asp-1176. Asn-1206 and Asn-1256 each carry an N-linked (GlcNAc...) asparagine glycan.

The protein belongs to the fibrillar collagen family. As to quaternary structure, trimers of one alpha 2(I) and two alpha 1(I) chains. Prolines at the third position of the tripeptide repeating unit (G-X-Y) are hydroxylated in some or all of the chains. In terms of tissue distribution, forms the fibrils of tendon, ligaments and bones. In bones the fibrils are mineralized with calcium hydroxyapatite.

The protein resides in the secreted. It is found in the extracellular space. The protein localises to the extracellular matrix. Functionally, type I collagen is a member of group I collagen (fibrillar forming collagen). In Aquarana catesbeiana (American bullfrog), this protein is Collagen alpha-2(I) chain (COL1A2).